A 739-amino-acid polypeptide reads, in one-letter code: Trehalose phosphorylase (739 aa).

Residues 1–26 (MSTPHHQFESKSSTAIRRRLSSSVSS) constitute a propeptide that is removed on maturation. Residues 1-28 (MSTPHHQFESKSSTAIRRRLSSSVSSKQ) form a disordered region.

The protein belongs to the glycosyltransferase group 1 family. Glycosyltransferase 4 subfamily. In terms of assembly, homodimer.

It carries out the reaction alpha,alpha-trehalose + phosphate = alpha-D-glucose + alpha-D-glucose 1-phosphate. In terms of biological role, reversibly catalyzes the synthesis and degradation of trehalose from glucose and alpha-D-glucose 1-phosphate. The equilibrium lies in the direction of trehalose synthesis. The sequence is that of Trehalose phosphorylase from Pleurotus pulmonarius (Indian oyster mushroom).